Consider the following 60-residue polypeptide: U-scutigerotoxin(02)-Tl4a (60 aa).

The protein belongs to the scutigerotoxin-02 family. Post-translationally, contains 3 disulfide bonds. In terms of tissue distribution, expressed by the venom gland.

It is found in the secreted. In Thereuopoda longicornis (Long-legged centipede), this protein is U-scutigerotoxin(02)-Tl4a.